Here is a 425-residue protein sequence, read N- to C-terminus: UPF0597 protein VP2173 (425 aa).

This sequence belongs to the UPF0597 family.

The sequence is that of UPF0597 protein VP2173 from Vibrio parahaemolyticus serotype O3:K6 (strain RIMD 2210633).